The following is a 320-amino-acid chain: o-succinylbenzoate synthase (320 aa).

K133 acts as the Proton donor in catalysis. 3 residues coordinate Mg(2+): D161, E190, and D213. K235 functions as the Proton acceptor in the catalytic mechanism.

The protein belongs to the mandelate racemase/muconate lactonizing enzyme family. MenC type 1 subfamily. Requires a divalent metal cation as cofactor.

The catalysed reaction is (1R,6R)-6-hydroxy-2-succinyl-cyclohexa-2,4-diene-1-carboxylate = 2-succinylbenzoate + H2O. Its pathway is quinol/quinone metabolism; 1,4-dihydroxy-2-naphthoate biosynthesis; 1,4-dihydroxy-2-naphthoate from chorismate: step 4/7. It functions in the pathway quinol/quinone metabolism; menaquinone biosynthesis. Converts 2-succinyl-6-hydroxy-2,4-cyclohexadiene-1-carboxylate (SHCHC) to 2-succinylbenzoate (OSB). The protein is o-succinylbenzoate synthase of Escherichia fergusonii (strain ATCC 35469 / DSM 13698 / CCUG 18766 / IAM 14443 / JCM 21226 / LMG 7866 / NBRC 102419 / NCTC 12128 / CDC 0568-73).